The sequence spans 188 residues: dCTP deaminase (188 aa).

Residues 111 to 116 (KSTYAR), 135 to 137 (TLE), Gln156, Tyr170, and Gln180 contribute to the dCTP site. Glu137 functions as the Proton donor/acceptor in the catalytic mechanism.

This sequence belongs to the dCTP deaminase family. As to quaternary structure, homotrimer.

The catalysed reaction is dCTP + H2O + H(+) = dUTP + NH4(+). It participates in pyrimidine metabolism; dUMP biosynthesis; dUMP from dCTP (dUTP route): step 1/2. In terms of biological role, catalyzes the deamination of dCTP to dUTP. The polypeptide is dCTP deaminase (Acidovorax sp. (strain JS42)).